A 192-amino-acid polypeptide reads, in one-letter code: uncharacterized protein (192 aa).

Residues 72–192 form the B12-binding domain; it reads GATVLLIVPP…SLVISEFSLV (121 aa).

This is an uncharacterized protein from Rhodobacter capsulatus (Rhodopseudomonas capsulata).